Here is a 347-residue protein sequence, read N- to C-terminus: NADH-ubiquinone oxidoreductase chain 2 (347 aa).

Transmembrane regions (helical) follow at residues 13-33 (IFAG…WVGL), 55-75 (AAIK…MAIL), 96-116 (LMIV…FWVP), 123-143 (PLMS…SIMY), 150-170 (NVSL…WGGL), 178-198 (ILAY…PYNP), 201-221 (TILN…LLNL), 247-267 (TLLS…WLII), 277-297 (ITPT…LRLI), and 325-345 (FLPT…FMLM).

It belongs to the complex I subunit 2 family. Core subunit of respiratory chain NADH dehydrogenase (Complex I) which is composed of 45 different subunits. Interacts with TMEM242.

Its subcellular location is the mitochondrion inner membrane. The catalysed reaction is a ubiquinone + NADH + 5 H(+)(in) = a ubiquinol + NAD(+) + 4 H(+)(out). Its function is as follows. Core subunit of the mitochondrial membrane respiratory chain NADH dehydrogenase (Complex I) which catalyzes electron transfer from NADH through the respiratory chain, using ubiquinone as an electron acceptor. Essential for the catalytic activity and assembly of complex I. In Gorilla gorilla gorilla (Western lowland gorilla), this protein is NADH-ubiquinone oxidoreductase chain 2.